The chain runs to 242 residues: MATNAKPVYQRILLKLSGEALQGAEGFGIDASVLDRMAQEVKELVELGVEVGVVIGGGNLFRGAGLAEAGMNRVVGDHMGMLATVMNGLAMRDALHRAYVNARLMSAIPLNGVCDNYSWAEAISLLRHGRVVIFSAGTGNPFFTTDSAACLRGIEIEADVVLKATKVDGVYSADPAKDSEAVLFDKLSYQQVLERELKVMDLAAFTLARDHSLPIRVFNMNKPGALRRVVMGENEGTLIFHE.

15–18 serves as a coordination point for ATP; that stretch reads KLSG. An involved in allosteric activation by GTP region spans residues 23 to 28; that stretch reads GAEGFG. Gly57 contacts UMP. Residues Gly58 and Arg62 each coordinate ATP. UMP is bound by residues Asp77 and 138 to 145; that span reads TGNPFFTT. Positions 165, 171, and 174 each coordinate ATP.

Belongs to the UMP kinase family. Homohexamer.

The protein resides in the cytoplasm. The enzyme catalyses UMP + ATP = UDP + ADP. The protein operates within pyrimidine metabolism; CTP biosynthesis via de novo pathway; UDP from UMP (UMPK route): step 1/1. Its activity is regulated as follows. Allosterically activated by GTP. Inhibited by UTP. Its function is as follows. Catalyzes the reversible phosphorylation of UMP to UDP. This chain is Uridylate kinase, found in Photorhabdus laumondii subsp. laumondii (strain DSM 15139 / CIP 105565 / TT01) (Photorhabdus luminescens subsp. laumondii).